Consider the following 343-residue polypeptide: Dihydroorotase (343 aa).

Zn(2+)-binding residues include His-13 and His-15. Substrate-binding positions include 15–17 (HLR) and Asn-41. Zn(2+)-binding residues include Lys-99, His-136, and His-174. Lys-99 carries the post-translational modification N6-carboxylysine. A substrate-binding site is contributed by His-136. Leu-219 is a binding site for substrate. Asp-247 is a Zn(2+) binding site. The active site involves Asp-247. Substrate-binding residues include His-251 and Ala-263.

This sequence belongs to the metallo-dependent hydrolases superfamily. DHOase family. Class II DHOase subfamily. As to quaternary structure, homodimer. Requires Zn(2+) as cofactor.

It catalyses the reaction (S)-dihydroorotate + H2O = N-carbamoyl-L-aspartate + H(+). It functions in the pathway pyrimidine metabolism; UMP biosynthesis via de novo pathway; (S)-dihydroorotate from bicarbonate: step 3/3. Its function is as follows. Catalyzes the reversible cyclization of carbamoyl aspartate to dihydroorotate. The polypeptide is Dihydroorotase (Shewanella oneidensis (strain ATCC 700550 / JCM 31522 / CIP 106686 / LMG 19005 / NCIMB 14063 / MR-1)).